We begin with the raw amino-acid sequence, 241 residues long: Trypsin-1 (241 aa).

The signal sequence occupies residues 1–13 (MKSLIFVLLLGAV). The propeptide at 14–19 (FAEEDK) is activation peptide. The Peptidase S1 domain occupies 20-239 (IVGGYECTKH…LSGWVRDTMA (220 aa)). Cystine bridges form between C26/C155, C44/C60, C128/C228, C135/C201, C166/C180, and C191/C215. Active-site charge relay system residues include H59 and D103. Catalysis depends on S195, which acts as the Charge relay system.

This sequence belongs to the peptidase S1 family.

The protein resides in the secreted. It localises to the extracellular space. It catalyses the reaction Preferential cleavage: Arg-|-Xaa, Lys-|-Xaa.. The polypeptide is Trypsin-1 (Gadus morhua (Atlantic cod)).